The following is a 420-amino-acid chain: Probable glycosyltransferase YdaM (420 aa).

4 consecutive transmembrane segments (helical) span residues 4–24 (TLFF…MFLM), 299–319 (IIFD…GVIM), 332–352 (LHLS…FLFM), and 371–391 (FFIV…LVIY).

It belongs to the glycosyltransferase 2 family.

The protein resides in the cell membrane. This is Probable glycosyltransferase YdaM (ydaM) from Bacillus subtilis (strain 168).